The sequence spans 357 residues: Phenylalanine--tRNA ligase alpha subunit (357 aa).

Glu259 is a binding site for Mg(2+).

The protein belongs to the class-II aminoacyl-tRNA synthetase family. Phe-tRNA synthetase alpha subunit type 1 subfamily. As to quaternary structure, tetramer of two alpha and two beta subunits. The cofactor is Mg(2+).

It is found in the cytoplasm. It carries out the reaction tRNA(Phe) + L-phenylalanine + ATP = L-phenylalanyl-tRNA(Phe) + AMP + diphosphate + H(+). The sequence is that of Phenylalanine--tRNA ligase alpha subunit from Jannaschia sp. (strain CCS1).